The primary structure comprises 290 residues: Cilia- and flagella-associated protein 298 (290 aa).

Belongs to the CFAP298 family. Interacts with ZMYND10.

It localises to the cytoplasm. Its subcellular location is the cytoskeleton. The protein resides in the cilium basal body. Its function is as follows. Plays a role in motile cilium function, possibly by acting on outer dynein arm assembly. Seems to be important for initiation rather than maintenance of cilium motility. Required for correct positioning of cilia at the apical cell surface, suggesting an additional role in the planar cell polarity (PCP) pathway. May suppress canonical Wnt signaling activity. This chain is Cilia- and flagella-associated protein 298, found in Mus musculus (Mouse).